The primary structure comprises 271 residues: Tryptophan synthase alpha chain (271 aa).

Residues Glu56 and Asp67 each act as proton acceptor in the active site.

The protein belongs to the TrpA family. As to quaternary structure, tetramer of two alpha and two beta chains.

The enzyme catalyses (1S,2R)-1-C-(indol-3-yl)glycerol 3-phosphate + L-serine = D-glyceraldehyde 3-phosphate + L-tryptophan + H2O. Its pathway is amino-acid biosynthesis; L-tryptophan biosynthesis; L-tryptophan from chorismate: step 5/5. In terms of biological role, the alpha subunit is responsible for the aldol cleavage of indoleglycerol phosphate to indole and glyceraldehyde 3-phosphate. The chain is Tryptophan synthase alpha chain from Mycobacterium intracellulare.